Reading from the N-terminus, the 64-residue chain is Fatty acid synthase (64 aa).

A Carrier domain is found at 1–64 (AEGEGQRDLL…VLSMREVRQL (64 aa)). Serine 38 bears the O-(pantetheine 4'-phosphoryl)serine; alternate mark. Position 38 is a phosphoserine; alternate (serine 38).

In terms of assembly, homodimer which is arranged in a head to tail fashion. Interacts with CEACAM1; this interaction is insulin and phosphorylation-dependent; reduces fatty-acid synthase activity.

It localises to the cytoplasm. It is found in the melanosome. The enzyme catalyses acetyl-CoA + n malonyl-CoA + 2n NADPH + 2n H(+) = a long-chain fatty acid + (n+1) CoA + n CO2 + 2n NADP(+).. Fatty acid synthetase catalyzes the formation of long-chain fatty acids from acetyl-CoA, malonyl-CoA and NADPH. This multifunctional protein has 7 catalytic activities as an acyl carrier protein. The protein is Fatty acid synthase (FASN) of Oryctolagus cuniculus (Rabbit).